Consider the following 966-residue polypeptide: Catenin alpha-2 (966 aa).

Over residues 924 to 940 (PEKKPLVKREKPEEYQT) the composition is skewed to basic and acidic residues. Positions 924-952 (PEKKPLVKREKPEEYQTRVRRGSQKKHIS) are disordered. Positions 941 to 951 (RVRRGSQKKHI) are enriched in basic residues.

Belongs to the vinculin/alpha-catenin family.

It is found in the cell membrane. The protein resides in the cytoplasm. It localises to the cytoskeleton. The protein localises to the cell junction. Its subcellular location is the adherens junction. It is found in the cell projection. The protein resides in the axon. It localises to the nucleus. Functionally, may function as a linker between cadherin adhesion receptors and the cytoskeleton to regulate cell-cell adhesion and differentiation in the nervous system. The protein is Catenin alpha-2 (ctnna2) of Xenopus tropicalis (Western clawed frog).